The sequence spans 204 residues: Urease accessory protein UreG (204 aa).

11–18 is a binding site for GTP; that stretch reads GPVGAGKT.

The protein belongs to the SIMIBI class G3E GTPase family. UreG subfamily. In terms of assembly, homodimer. UreD, UreF and UreG form a complex that acts as a GTP-hydrolysis-dependent molecular chaperone, activating the urease apoprotein by helping to assemble the nickel containing metallocenter of UreC. The UreE protein probably delivers the nickel.

The protein localises to the cytoplasm. Functionally, facilitates the functional incorporation of the urease nickel metallocenter. This process requires GTP hydrolysis, probably effectuated by UreG. The polypeptide is Urease accessory protein UreG (Staphylococcus aureus (strain MSSA476)).